Here is a 336-residue protein sequence, read N- to C-terminus: Fructose-1,6-bisphosphatase class 1 (336 aa).

Mg(2+) contacts are provided by Glu90, Asp112, Leu114, and Asp115. Substrate is bound by residues 115 to 118, Asn207, and Lys273; that span reads DGSS. Glu279 is a binding site for Mg(2+).

This sequence belongs to the FBPase class 1 family. As to quaternary structure, homotetramer. Mg(2+) serves as cofactor.

The protein localises to the cytoplasm. The enzyme catalyses beta-D-fructose 1,6-bisphosphate + H2O = beta-D-fructose 6-phosphate + phosphate. It participates in carbohydrate biosynthesis; gluconeogenesis. This Xanthomonas euvesicatoria pv. vesicatoria (strain 85-10) (Xanthomonas campestris pv. vesicatoria) protein is Fructose-1,6-bisphosphatase class 1.